The chain runs to 848 residues: Aryl hydrocarbon receptor (848 aa).

A propeptide spanning residues 1-9 (MSSGANITY) is cleaved from the precursor. Residues 1–38 (MSSGANITYASRKRRKPVQKTVKPIPAEGIKSNPSKRH) are disordered. 2 short sequence motifs (nuclear localization signal) span residues 12–15 (RKRR) and 36–41 (KRHRDR). A bHLH domain is found at 26 to 79 (PAEGIKSNPSKRHRDRLNTELDRLASLLPFPQDVINKLDKLSVLRLSVSYLRAK). Positions 37-65 (RHRDRLNTELDRLASLLPFPQDVINKLDK) are DNA-binding. Required for maintaining the overall integrity of the AHR:ARNT heterodimer and its transcriptional activity stretches follow at residues 49-81 (LASL…AKSF), 116-124 (LLQALNGFV), and 260-262 (FAI). The Nuclear export signal signature appears at 63–71 (LDKLSVLRL). Positions 116–179 (LLQALNGFVL…RQLHWALNPD (64 aa)) constitute a PAS 1 domain. Residues 269 to 336 (PSILEIRTKN…CAESHIRMIK (68 aa)) form the PAS 2 domain. In terms of domain architecture, PAC spans 342 to 380 (MTVFRLFAKHSRWRWVQSNARLIYRNGRPDYIIATQRPL). A disordered region spans residues 421–449 (LPIRTKSNTSRKDWAPQSTPSKDSFHPSS). Over residues 436 to 449 (PQSTPSKDSFHPSS) the composition is skewed to polar residues.

As to quaternary structure, homodimer. Heterodimer; efficient DNA binding requires dimerization with another bHLH protein. Interacts with ARNT; the heterodimer ARNT:AHR binds to core DNA sequence 5'-TGCGTG-3' within the dioxin response element (DRE) of target gene promoters and activates their transcription. Binds MYBBP1A. Interacts with coactivators including SRC-1, RIP140 and NOCA7, and with the corepressor SMRT. Interacts with NEDD8 and IVNS1ABP. Interacts with BMAL1. Interacts with HSP90AB1. Interacts with TIPARP; leading to mono-ADP-ribosylation of AHR and subsequent inhibition of AHR. In terms of processing, mono-ADP-ribosylated, leading to inhibit transcription activator activity of AHR. As to expression, expressed in all tissues tested including brain, heart, kidney, liver, lung, muscle, ovary, skin, spleen and thymus.

The protein resides in the cytoplasm. It is found in the nucleus. Ligand-activated transcription factor that enables cells to adapt to changing conditions by sensing compounds from the environment, diet, microbiome and cellular metabolism, and which plays important roles in development, immunity and cancer. Upon ligand binding, translocates into the nucleus, where it heterodimerizes with ARNT and induces transcription by binding to xenobiotic response elements (XRE). Regulates a variety of biological processes, including angiogenesis, hematopoiesis, drug and lipid metabolism, cell motility and immune modulation. Xenobiotics can act as ligands: upon xenobiotic-binding, activates the expression of multiple phase I and II xenobiotic chemical metabolizing enzyme genes (such as the CYP1A1 gene). Mediates biochemical and toxic effects of halogenated aromatic hydrocarbons. Next to xenobiotics, natural ligands derived from plants, microbiota, and endogenous metabolism are potent AHR agonists. Tryptophan (Trp) derivatives constitute an important class of endogenous AHR ligands. Acts as a negative regulator of anti-tumor immunity: indoles and kynurenic acid generated by Trp catabolism act as ligand and activate AHR, thereby promoting AHR-driven cancer cell motility and suppressing adaptive immunity. Regulates the circadian clock by inhibiting the basal and circadian expression of the core circadian component PER1. Inhibits PER1 by repressing the CLOCK-BMAL1 heterodimer mediated transcriptional activation of PER1. The heterodimer ARNT:AHR binds to core DNA sequence 5'-TGCGTG-3' within the dioxin response element (DRE) of target gene promoters and activates their transcription. This is Aryl hydrocarbon receptor (Ahr) from Mus musculus (Mouse).